The following is a 130-amino-acid chain: Small ribosomal subunit protein uS9 (130 aa).

Belongs to the universal ribosomal protein uS9 family.

This is Small ribosomal subunit protein uS9 from Streptococcus agalactiae serotype Ia (strain ATCC 27591 / A909 / CDC SS700).